The sequence spans 537 residues: Extracellular exo-inulinase inuE (537 aa).

The N-terminal stretch at 1–19 (MARLLKAVTVCALAGIAHA) is a signal peptide. The active site involves Asp-41. N-linked (GlcNAc...) asparagine glycosylation is found at Asn-49, Asn-67, Asn-112, Asn-300, Asn-363, Asn-398, Asn-430, and Asn-531.

Belongs to the glycosyl hydrolase 32 family.

It is found in the secreted. The catalysed reaction is Hydrolysis of terminal, non-reducing (2-&gt;1)- and (2-&gt;6)-linked beta-D-fructofuranose residues in fructans.. The catalytic activity is increased by manganese cathions, but strongly inhibited by other metal ions such as copper, aluminum, silver, iron, nickel, zinc and magnesium cathions. In terms of biological role, exo-inulinase involved in utilization of the plant storage polymer inulin, consisting of fructooligosaccharides with a degree of polymerization (DP) value from 2 to 60. Splits off terminal fructose units successively from the non-reducing end of the inulin molecule, and also hydrolyze sucrose and raffinose. This Aspergillus ficuum protein is Extracellular exo-inulinase inuE (exoI).